The primary structure comprises 608 residues: uncharacterized protein (608 aa).

The signal sequence occupies residues 1–38 (MWLQQRLKVFPGLLSSSWARRVLAVSGFLVIIYWYIFS). Topologically, residues 39–563 (GSLFRSFWYA…EEHMAKQYRG (525 aa)) are extracellular. A glycan (N-linked (GlcNAc...) asparagine) is linked at N337. The helical transmembrane segment at 564–584 (LPFLFWFSVASLITLFHLFLF) threads the bilayer. The Cytoplasmic segment spans residues 585–608 (KLIYNEYCGPGAKPLFRSKEDTSV).

The protein resides in the membrane. This is an uncharacterized protein from Xenopus tropicalis (Western clawed frog).